The following is a 120-amino-acid chain: Protein TCL1B4 (120 aa).

Belongs to the TCL1 family.

The chain is Protein TCL1B4 (Tcl1b4) from Mus musculus (Mouse).